We begin with the raw amino-acid sequence, 95 residues long: MDFNTSLRRAIKTGKVILGQNETKDSIEKGSAKLVVVAANCPAEFSGYLSGKDGVKTYTYEGSGVQLGRACGKPFIVSALAIEESGDSDILTLSR.

It belongs to the eukaryotic ribosomal protein eL30 family.

This is Large ribosomal subunit protein eL30 from Methanospirillum hungatei JF-1 (strain ATCC 27890 / DSM 864 / NBRC 100397 / JF-1).